We begin with the raw amino-acid sequence, 174 residues long: Calcineurin subunit B (174 aa).

EF-hand domains are found at residues glutamate 21 to proline 56, arginine 60 to histidine 88, asparagine 90 to threonine 125, and glutamine 131 to threonine 166. Ca(2+)-binding residues include aspartate 34, asparagine 36, serine 38, serine 40, glutamate 45, aspartate 66, aspartate 68, aspartate 72, glutamate 77, aspartate 103, aspartate 105, aspartate 107, tyrosine 109, glutamate 114, aspartate 144, aspartate 146, aspartate 148, lysine 150, and glutamate 155.

The protein belongs to the calcineurin regulatory subunit family. As to quaternary structure, composed of a catalytic subunit (A) and a regulatory subunit (B).

Regulatory subunit of calcineurin, a calcium-dependent, calmodulin stimulated protein phosphatase. Confers calcium sensitivity. In Schizosaccharomyces pombe (strain 972 / ATCC 24843) (Fission yeast), this protein is Calcineurin subunit B (cnb1).